Consider the following 585-residue polypeptide: Arginine--tRNA ligase (585 aa).

The short motif at 131 to 141 (ANPTGPMHVGH) is the 'HIGH' region element.

Belongs to the class-I aminoacyl-tRNA synthetase family. As to quaternary structure, monomer.

It is found in the cytoplasm. It catalyses the reaction tRNA(Arg) + L-arginine + ATP = L-arginyl-tRNA(Arg) + AMP + diphosphate. The polypeptide is Arginine--tRNA ligase (Rhizobium leguminosarum bv. trifolii (strain WSM2304)).